We begin with the raw amino-acid sequence, 257 residues long: 3-oxo-5-alpha-steroid 4-dehydrogenase 1 (257 aa).

The next 6 membrane-spanning stretches (helical) occupy residues 7 to 27, 50 to 70, 84 to 104, 109 to 129, 149 to 169, and 208 to 228; these read FLLD…YVLL, AAWT…CAGA, ILLA…PFLI, PMPL…GYLQ, FLTG…SDHV, and ALAS…CVLF.

It belongs to the steroid 5-alpha reductase family.

Its subcellular location is the microsome membrane. It is found in the endoplasmic reticulum membrane. The catalysed reaction is a 3-oxo-5alpha-steroid + NADP(+) = a 3-oxo-Delta(4)-steroid + NADPH + H(+). The enzyme catalyses 5alpha-pregnane-3,20-dione + NADP(+) = progesterone + NADPH + H(+). It carries out the reaction 17beta-hydroxy-5alpha-androstan-3-one + NADP(+) = testosterone + NADPH + H(+). It catalyses the reaction androst-4-ene-3,17-dione + NADPH + H(+) = 5alpha-androstan-3,17-dione + NADP(+). In terms of biological role, converts testosterone into 5-alpha-dihydrotestosterone and progesterone or corticosterone into their corresponding 5-alpha-3-oxosteroids. It plays a central role in sexual differentiation and androgen physiology. In Bos taurus (Bovine), this protein is 3-oxo-5-alpha-steroid 4-dehydrogenase 1 (SRD5A1).